We begin with the raw amino-acid sequence, 569 residues long: MLLLFSVILISWVSTVGGEGTLCDFPKIHHGFLYDEEDYNPFSQVPTGEVFYYSCEYNFVSPSKSFWTRITCTEEGWSPTPKCLRMCSFPFVKNGHSESSGLIHLEGDTVQIICNTGYSLQNNEKNISCVERGWSTPPICSFTKGECHVPILEANVDAQPKKESYKVGDVLKFSCRKNLIRVGSDSVQCYQFGWSPNFPTCKGQVRSCGPPPQLSNGEVKEIRKEEYGHNEVVEYDCNPNFIINGPKKIQCVDGEWTTLPTCVEQVKTCGYIPELEYGYVQPSVPPYQHGVSVEVNCRNEYAMIGNNMITCINGIWTELPMCVATHQLKRCKIAGVNIKTLLKLSGKEFNHNSRIRYRCSDIFRYRHSVCINGKWNPEVDCTEKREQFCPPPPQIPNAQNMTTTVNYQDGEKVAVLCKENYLLPEAKEIVCKDGRWQSLPRCVESTAYCGPPPSINNGDTTSFPLSVYPPGSTVTYRCQSFYKLQGSVTVTCRNKQWSEPPRCLDPCVVSEENMNKNNIQLKWRNDGKLYAKTGDAVEFQCKFPHKAMISSPPFRAICQEGKFEYPICE.

The N-terminal stretch at 1 to 18 is a signal peptide; sequence MLLLFSVILISWVSTVGG. 18 disulfide bridges follow: Cys-23/Cys-72, Cys-55/Cys-83, Cys-87/Cys-129, Cys-114/Cys-140, Cys-147/Cys-189, Cys-175/Cys-201, Cys-208/Cys-251, Cys-237/Cys-262, Cys-269/Cys-311, Cys-297/Cys-322, Cys-331/Cys-370, Cys-359/Cys-381, Cys-389/Cys-431, Cys-417/Cys-442, Cys-449/Cys-492, Cys-478/Cys-503, Cys-507/Cys-558, and Cys-541/Cys-568. 9 consecutive Sushi domains span residues 23–83, 85–142, 145–203, 206–264, 267–324, 329–383, 387–444, 447–505, and 507–569; these read CDFP…TPKC, RMCS…ICSF, GECH…TCKG, RSCG…TCVE, KTCG…MCVA, KRCK…DCTE, QFCP…RCVE, AYCG…RCLD, and CVVS…PICE. A glycan (N-linked (GlcNAc...) asparagine) is linked at Asn-126. The N-linked (GlcNAc...) asparagine glycan is linked to Asn-400.

In terms of assembly, head-to-tail homodimer and heterodimer with CFHR1 or CFHR2. Binds C3b in vitro. Expressed by the liver and secreted in plasma.

It is found in the secreted. Functionally, involved in complement regulation. The dimerized forms have avidity for tissue-bound complement fragments and efficiently compete with the physiological complement inhibitor CFH. In Homo sapiens (Human), this protein is Complement factor H-related protein 5 (CFHR5).